The primary structure comprises 224 residues: Envelope glycoprotein L (224 aa).

An N-terminal signal peptide occupies residues 1-19 (MGILGWVGLIAVGVLCVRG). The tract at residues 20-161 (GLPSTEYVIR…FDYSRTRRCV (142 aa)) is interaction with gH. In terms of domain architecture, gL alphaherpesvirus-type spans 23 to 201 (STEYVIRSRV…LTTPPPIIAT (179 aa)). 2 cysteine pairs are disulfide-bonded: Cys44–Cys76 and Cys149–Cys160. The interval 161 to 224 (VGRQDLGPTN…RRRRPHSRRL (64 aa)) is disordered. Residues 213-224 (KSRRRRPHSRRL) show a composition bias toward basic residues.

Belongs to the herpesviridae glycoprotein L (gL) family. Alphaherpesvirinae gL subfamily. In terms of assembly, interacts with glycoprotein H (gH); this interaction is necessary for the correct processing and cell surface expression of gH. The heterodimer gH/gL seems to interact with gB trimers during fusion.

It localises to the virion membrane. It is found in the host cell membrane. The protein resides in the host Golgi apparatus. The protein localises to the host trans-Golgi network. Its function is as follows. The heterodimer glycoprotein H-glycoprotein L is required for the fusion of viral and plasma membranes leading to virus entry into the host cell. Acts as a functional inhibitor of gH and maintains gH in an inhibited form. Upon binding to host integrins, gL dissociates from gH leading to activation of the viral fusion glycoproteins gB and gH. The polypeptide is Envelope glycoprotein L (Human herpesvirus 1 (strain 17) (HHV-1)).